Consider the following 295-residue polypeptide: Tetrahydromethanopterin S-methyltransferase subunit E (295 aa).

7 consecutive transmembrane segments (helical) span residues 4 to 24 (MITG…AGAA), 60 to 80 (GEPV…FVLM), 87 to 107 (VIMA…TYAV), 140 to 160 (GFIV…PIPG), 161 to 181 (FAHP…IGAI), 234 to 254 (YGGP…FWNT), and 255 to 275 (IVFG…LLII).

Belongs to the MtrE family. In terms of assembly, the complex is composed of 8 subunits; MtrA, MtrB, MtrC, MtrD, MtrE, MtrF, MtrG and MtrH.

It localises to the cell membrane. It catalyses the reaction 5-methyl-5,6,7,8-tetrahydromethanopterin + coenzyme M + 2 Na(+)(in) = 5,6,7,8-tetrahydromethanopterin + methyl-coenzyme M + 2 Na(+)(out). The protein operates within one-carbon metabolism; methanogenesis from CO(2); methyl-coenzyme M from 5,10-methylene-5,6,7,8-tetrahydromethanopterin: step 2/2. Its function is as follows. Part of a complex that catalyzes the formation of methyl-coenzyme M and tetrahydromethanopterin from coenzyme M and methyl-tetrahydromethanopterin. This is an energy-conserving, sodium-ion translocating step. The polypeptide is Tetrahydromethanopterin S-methyltransferase subunit E (Methanothermobacter marburgensis (strain ATCC BAA-927 / DSM 2133 / JCM 14651 / NBRC 100331 / OCM 82 / Marburg) (Methanobacterium thermoautotrophicum)).